The sequence spans 487 residues: Berbamunine synthase (487 aa).

Heme is bound at residue Cys-429.

The protein belongs to the cytochrome P450 family. Heme serves as cofactor.

The protein localises to the endoplasmic reticulum membrane. Its subcellular location is the microsome membrane. The enzyme catalyses (R)-N-methylcoclaurine + (S)-N-methylcoclaurine + reduced [NADPH--hemoprotein reductase] + O2 = berbamunine + oxidized [NADPH--hemoprotein reductase] + 2 H2O + H(+). The protein operates within alkaloid biosynthesis; berbamunine biosynthesis; berbamunine from (R)-N-methylcoclaurine and (S)-N-methylcoclaurine: step 1/1. Functionally, forms the bisbenzylisoquinoline alkaloid berbamunine by phenol oxidation of N-methylcoclaurine without the incorporation of oxygen into the product. Oxidatively couples either two molecules of (R)-N-methylcoclaurine to form the (R,R) dimer guattegaumerine or one molecule each of (R)- and (S)-N-methylcoclaurine to form the (R,S) dimer berbamunine. This Berberis stolonifera (Barberry) protein is Berbamunine synthase (CYP80A1).